Reading from the N-terminus, the 61-residue chain is Large ribosomal subunit protein uL30 (61 aa).

It belongs to the universal ribosomal protein uL30 family. Part of the 50S ribosomal subunit.

This Shewanella halifaxensis (strain HAW-EB4) protein is Large ribosomal subunit protein uL30.